Consider the following 161-residue polypeptide: ATP synthase subunit b 1 (161 aa).

A helical membrane pass occupies residues 1-21 (MFATAEFWILACLVAFFAILG).

This sequence belongs to the ATPase B chain family. As to quaternary structure, F-type ATPases have 2 components, F(1) - the catalytic core - and F(0) - the membrane proton channel. F(1) has five subunits: alpha(3), beta(3), gamma(1), delta(1), epsilon(1). F(0) has three main subunits: a(1), b(2) and c(10-14). The alpha and beta chains form an alternating ring which encloses part of the gamma chain. F(1) is attached to F(0) by a central stalk formed by the gamma and epsilon chains, while a peripheral stalk is formed by the delta and b chains.

The protein resides in the cell inner membrane. Functionally, f(1)F(0) ATP synthase produces ATP from ADP in the presence of a proton or sodium gradient. F-type ATPases consist of two structural domains, F(1) containing the extramembraneous catalytic core and F(0) containing the membrane proton channel, linked together by a central stalk and a peripheral stalk. During catalysis, ATP synthesis in the catalytic domain of F(1) is coupled via a rotary mechanism of the central stalk subunits to proton translocation. Its function is as follows. Component of the F(0) channel, it forms part of the peripheral stalk, linking F(1) to F(0). This Parvibaculum lavamentivorans (strain DS-1 / DSM 13023 / NCIMB 13966) protein is ATP synthase subunit b 1.